Consider the following 497-residue polypeptide: Cytochrome P450 2D6 (497 aa).

Residue D301 coordinates substrate. Position 443 (C443) interacts with heme.

This sequence belongs to the cytochrome P450 family. It depends on heme as a cofactor.

Its subcellular location is the endoplasmic reticulum membrane. It is found in the microsome membrane. The enzyme catalyses (5Z,8Z,11Z,14Z)-eicosatetraenoate + reduced [NADPH--hemoprotein reductase] + O2 = (8R,9S)-epoxy-(5Z,11Z,14Z)-eicosatrienoate + oxidized [NADPH--hemoprotein reductase] + H2O + H(+). It catalyses the reaction (5Z,8Z,11Z,14Z)-eicosatetraenoate + reduced [NADPH--hemoprotein reductase] + O2 = (11R,12S)-epoxy-(5Z,8Z,14Z)-eicosatrienoate + oxidized [NADPH--hemoprotein reductase] + H2O + H(+). The catalysed reaction is (5Z,8Z,11Z,14Z)-eicosatetraenoate + reduced [NADPH--hemoprotein reductase] + O2 = (14S,15R)-epoxy-(5Z,8Z,11Z)-eicosatrienoate + oxidized [NADPH--hemoprotein reductase] + H2O + H(+). It carries out the reaction N-(5Z,8Z,11Z,14Z-eicosatetraenoyl)-ethanolamine + reduced [NADPH--hemoprotein reductase] + O2 = N-(8,9-epoxy-5Z,11Z,14Z-eicosatrienoyl)-ethanolamine + oxidized [NADPH--hemoprotein reductase] + H2O + H(+). The enzyme catalyses N-(5Z,8Z,11Z,14Z-eicosatetraenoyl)-ethanolamine + reduced [NADPH--hemoprotein reductase] + O2 = N-(11,12-epoxy-5Z,8Z,14Z-eicosatrienoyl)-ethanolamine + oxidized [NADPH--hemoprotein reductase] + H2O + H(+). It catalyses the reaction N-(5Z,8Z,11Z,14Z-eicosatetraenoyl)-ethanolamine + reduced [NADPH--hemoprotein reductase] + O2 = N-(14,15-epoxy-5Z,8Z,11Z-eicosatrienoyl)-ethanolamine + oxidized [NADPH--hemoprotein reductase] + H2O + H(+). The catalysed reaction is N-(5Z,8Z,11Z,14Z-eicosatetraenoyl)-ethanolamine + reduced [NADPH--hemoprotein reductase] + O2 = N-(20-hydroxy-5Z,8Z,11Z,14Z-eicosatetraenoyl)-ethanolamine + oxidized [NADPH--hemoprotein reductase] + H2O + H(+). It carries out the reaction (5Z,8Z,11Z,14Z,17Z)-eicosapentaenoate + reduced [NADPH--hemoprotein reductase] + O2 = (17S,18R)-epoxy-(5Z,8Z,11Z,14Z)-eicosatetraenoate + oxidized [NADPH--hemoprotein reductase] + H2O + H(+). The enzyme catalyses (4Z,7Z,10Z,13Z,16Z,19Z)-docosahexaenoate + reduced [NADPH--hemoprotein reductase] + O2 = (19R,20S)-epoxy-(4Z,7Z,10Z,13Z,16Z)-docosapentaenoate + oxidized [NADPH--hemoprotein reductase] + H2O + H(+). It catalyses the reaction (4Z,7Z,10Z,13Z,16Z,19Z)-docosahexaenoate + reduced [NADPH--hemoprotein reductase] + O2 = (19S,20R)-epoxy-(4Z,7Z,10Z,13Z,16Z)-docosapentaenoate + oxidized [NADPH--hemoprotein reductase] + H2O + H(+). The catalysed reaction is cholesterol + reduced [NADPH--hemoprotein reductase] + O2 = 25-hydroxycholesterol + oxidized [NADPH--hemoprotein reductase] + H2O + H(+). It carries out the reaction all-trans-retinol + reduced [NADPH--hemoprotein reductase] + O2 = all-trans-retinal + oxidized [NADPH--hemoprotein reductase] + 2 H2O + H(+). Its pathway is cofactor metabolism; retinol metabolism. It participates in lipid metabolism; fatty acid metabolism. It functions in the pathway steroid metabolism; cholesterol metabolism. A cytochrome P450 monooxygenase involved in the metabolism of fatty acids, steroids and retinoids. Mechanistically, uses molecular oxygen inserting one oxygen atom into a substrate, and reducing the second into a water molecule, with two electrons provided by NADPH via cytochrome P450 reductase (NADPH--hemoprotein reductase). Catalyzes the epoxidation of double bonds of polyunsaturated fatty acids (PUFA). Metabolizes endocannabinoid arachidonoylethanolamide (anandamide) to 20-hydroxyeicosatetraenoic acid ethanolamide (20-HETE-EA) and 8,9-, 11,12-, and 14,15-epoxyeicosatrienoic acid ethanolamides (EpETrE-EAs), potentially modulating endocannabinoid system signaling. Catalyzes the hydroxylation of carbon-hydrogen bonds. Metabolizes cholesterol toward 25-hydroxycholesterol, a physiological regulator of cellular cholesterol homeostasis. Catalyzes the oxidative transformations of all-trans retinol to all-trans retinal, a precursor for the active form all-trans-retinoic acid. Also involved in the oxidative metabolism of drugs such as antiarrhythmics, adrenoceptor antagonists, and tricyclic antidepressants. This chain is Cytochrome P450 2D6 (CYP2D6), found in Pan paniscus (Pygmy chimpanzee).